Consider the following 117-residue polypeptide: Large ribosomal subunit protein uL18 (117 aa).

It belongs to the universal ribosomal protein uL18 family. As to quaternary structure, part of the 50S ribosomal subunit; part of the 5S rRNA/L5/L18/L25 subcomplex. Contacts the 5S and 23S rRNAs.

Functionally, this is one of the proteins that bind and probably mediate the attachment of the 5S RNA into the large ribosomal subunit, where it forms part of the central protuberance. The sequence is that of Large ribosomal subunit protein uL18 from Nitrosococcus oceani (strain ATCC 19707 / BCRC 17464 / JCM 30415 / NCIMB 11848 / C-107).